The chain runs to 224 residues: GrpE protein homolog 2, mitochondrial (224 aa).

The N-terminal 31 residues, 1-31, are a transit peptide targeting the mitochondrion; that stretch reads MAARLLWAVRRRMQPLAAHAASEGRGWLHPF. Lys141 carries the post-translational modification N6-acetyllysine.

It belongs to the GrpE family. As to quaternary structure, probable component of the PAM complex at least composed of a mitochondrial HSP70 protein, GRPEL1 or GRPEL2, TIMM44, TIMM16/PAM16 and TIMM14/DNAJC19.

Its subcellular location is the mitochondrion matrix. Essential component of the PAM complex, a complex required for the translocation of transit peptide-containing proteins from the inner membrane into the mitochondrial matrix in an ATP-dependent manner. Seems to control the nucleotide-dependent binding of mitochondrial HSP70 to substrate proteins. Stimulates ATPase activity of mt-HSP70. May also serve to modulate the interconversion of oligomeric (inactive) and monomeric (active) forms of mt-HSP70. This is GrpE protein homolog 2, mitochondrial (GRPEL2) from Bos taurus (Bovine).